The primary structure comprises 230 residues: Cytidylate kinase (230 aa).

ATP is bound at residue 17–25; sequence GPTASGKGT.

Belongs to the cytidylate kinase family. Type 1 subfamily.

It localises to the cytoplasm. It carries out the reaction CMP + ATP = CDP + ADP. The enzyme catalyses dCMP + ATP = dCDP + ADP. This is Cytidylate kinase from Ralstonia nicotianae (strain ATCC BAA-1114 / GMI1000) (Ralstonia solanacearum).